A 425-amino-acid chain; its full sequence is Dihydroorotase (425 aa).

Zn(2+) is bound by residues His-59 and His-61. Substrate contacts are provided by residues 61–63 (HLR) and Asn-93. Zn(2+) contacts are provided by Asp-151, His-178, and His-231. Residue Asn-277 participates in substrate binding. Residue Asp-304 participates in Zn(2+) binding. Asp-304 is an active-site residue. Residues His-308 and 322–323 (FG) contribute to the substrate site.

Belongs to the metallo-dependent hydrolases superfamily. DHOase family. Class I DHOase subfamily. The cofactor is Zn(2+).

It catalyses the reaction (S)-dihydroorotate + H2O = N-carbamoyl-L-aspartate + H(+). It participates in pyrimidine metabolism; UMP biosynthesis via de novo pathway; (S)-dihydroorotate from bicarbonate: step 3/3. Functionally, catalyzes the reversible cyclization of carbamoyl aspartate to dihydroorotate. This chain is Dihydroorotase, found in Staphylococcus epidermidis (strain ATCC 35984 / DSM 28319 / BCRC 17069 / CCUG 31568 / BM 3577 / RP62A).